The sequence spans 231 residues: Ribonuclease 3 (231 aa).

The 128-residue stretch at Val8–Gly135 folds into the RNase III domain. Glu48 lines the Mg(2+) pocket. Active-site residues include Asp52 and Glu124. Residue Glu124 participates in Mg(2+) binding. The DRBM domain occupies Asp161–Ala230. Positions Gly210–Gly231 are disordered. Basic and acidic residues predominate over residues Ser212–Gly231.

Belongs to the ribonuclease III family. In terms of assembly, homodimer. The cofactor is Mg(2+).

Its subcellular location is the cytoplasm. The catalysed reaction is Endonucleolytic cleavage to 5'-phosphomonoester.. In terms of biological role, digests double-stranded RNA. Involved in the processing of primary rRNA transcript to yield the immediate precursors to the large and small rRNAs (23S and 16S). Processes some mRNAs, and tRNAs when they are encoded in the rRNA operon. Processes pre-crRNA and tracrRNA of type II CRISPR loci if present in the organism. The protein is Ribonuclease 3 of Caulobacter vibrioides (strain ATCC 19089 / CIP 103742 / CB 15) (Caulobacter crescentus).